The sequence spans 266 residues: Ribonuclease 3 (266 aa).

The RNase III domain occupies 34 to 158 (IERCQEILGY…VIAALYIDGG (125 aa)). Mg(2+) is bound at residue Glu72. Asp76 is a catalytic residue. Mg(2+) contacts are provided by Asp144 and Glu147. The active site involves Glu147. Residues 185-254 (NHKSVLQQFA…AANALAELHN (70 aa)) enclose the DRBM domain.

This sequence belongs to the ribonuclease III family. Homodimer. It depends on Mg(2+) as a cofactor.

Its subcellular location is the cytoplasm. The enzyme catalyses Endonucleolytic cleavage to 5'-phosphomonoester.. Functionally, digests double-stranded RNA. Involved in the processing of primary rRNA transcript to yield the immediate precursors to the large and small rRNAs (23S and 16S). Processes some mRNAs, and tRNAs when they are encoded in the rRNA operon. Processes pre-crRNA and tracrRNA of type II CRISPR loci if present in the organism. In Rhodopirellula baltica (strain DSM 10527 / NCIMB 13988 / SH1), this protein is Ribonuclease 3.